A 142-amino-acid chain; its full sequence is SsrA-binding protein (142 aa).

It belongs to the SmpB family.

Its subcellular location is the cytoplasm. Its function is as follows. Required for rescue of stalled ribosomes mediated by trans-translation. Binds to transfer-messenger RNA (tmRNA), required for stable association of tmRNA with ribosomes. tmRNA and SmpB together mimic tRNA shape, replacing the anticodon stem-loop with SmpB. tmRNA is encoded by the ssrA gene; the 2 termini fold to resemble tRNA(Ala) and it encodes a 'tag peptide', a short internal open reading frame. During trans-translation Ala-aminoacylated tmRNA acts like a tRNA, entering the A-site of stalled ribosomes, displacing the stalled mRNA. The ribosome then switches to translate the ORF on the tmRNA; the nascent peptide is terminated with the 'tag peptide' encoded by the tmRNA and targeted for degradation. The ribosome is freed to recommence translation, which seems to be the essential function of trans-translation. This chain is SsrA-binding protein, found in Mycoplasma mobile (strain ATCC 43663 / 163K / NCTC 11711) (Mesomycoplasma mobile).